Reading from the N-terminus, the 277-residue chain is Translation initiation factor 2 subunit alpha (277 aa).

Positions 22 to 93 (GEIVVGTVQE…KRGQVDVSLK (72 aa)) constitute an S1 motif domain.

The protein belongs to the eIF-2-alpha family. As to quaternary structure, heterotrimer composed of an alpha, a beta and a gamma chain.

EIF-2 functions in the early steps of protein synthesis by forming a ternary complex with GTP and initiator tRNA. In Aeropyrum pernix (strain ATCC 700893 / DSM 11879 / JCM 9820 / NBRC 100138 / K1), this protein is Translation initiation factor 2 subunit alpha (eif2a).